The sequence spans 1405 residues: DNA-directed RNA polymerase subunit beta' (1405 aa).

Zn(2+)-binding residues include cysteine 70, cysteine 72, cysteine 85, and cysteine 88. Aspartate 460, aspartate 462, and aspartate 464 together coordinate Mg(2+). 4 residues coordinate Zn(2+): cysteine 815, cysteine 890, cysteine 897, and cysteine 900.

Belongs to the RNA polymerase beta' chain family. In terms of assembly, the RNAP catalytic core consists of 2 alpha, 1 beta, 1 beta' and 1 omega subunit. When a sigma factor is associated with the core the holoenzyme is formed, which can initiate transcription. Mg(2+) is required as a cofactor. The cofactor is Zn(2+).

It catalyses the reaction RNA(n) + a ribonucleoside 5'-triphosphate = RNA(n+1) + diphosphate. DNA-dependent RNA polymerase catalyzes the transcription of DNA into RNA using the four ribonucleoside triphosphates as substrates. The protein is DNA-directed RNA polymerase subunit beta' of Xanthomonas campestris pv. campestris (strain B100).